The chain runs to 369 residues: Probable methyltransferase TCM_000331 (369 aa).

Tyrosine 18, cysteine 60, asparagine 65, aspartate 98, leucine 99, serine 137, and phenylalanine 138 together coordinate S-adenosyl-L-homocysteine. 4 residues coordinate Mg(2+): asparagine 176, aspartate 261, phenylalanine 263, and asparagine 264.

Belongs to the methyltransferase superfamily. Type-7 methyltransferase family. The cofactor is Mg(2+).

This Theobroma cacao (Cacao) protein is Probable methyltransferase TCM_000331.